The primary structure comprises 438 residues: Tol-Pal system protein TolB (438 aa).

The first 21 residues, 1-21 (MVKRSLLVLALLICLPATLFA), serve as a signal peptide directing secretion.

Belongs to the TolB family. As to quaternary structure, the Tol-Pal system is composed of five core proteins: the inner membrane proteins TolA, TolQ and TolR, the periplasmic protein TolB and the outer membrane protein Pal. They form a network linking the inner and outer membranes and the peptidoglycan layer.

The protein localises to the periplasm. Part of the Tol-Pal system, which plays a role in outer membrane invagination during cell division and is important for maintaining outer membrane integrity. In Desulfosudis oleivorans (strain DSM 6200 / JCM 39069 / Hxd3) (Desulfococcus oleovorans), this protein is Tol-Pal system protein TolB.